Here is a 533-residue protein sequence, read N- to C-terminus: NEDD8-activating enzyme E1 regulatory subunit (533 aa).

The interval 330–343 is interaction with uba3; that stretch reads DMIADSDKFIKLQN.

Belongs to the ubiquitin-activating E1 family. ULA1 subfamily. Heterodimer of uba3 and nae1. The complex binds nedd8 and ube2m.

The protein operates within protein modification; protein neddylation. Regulatory subunit of the dimeric uba3-nae1 E1 enzyme. E1 activates nedd8 by first adenylating its C-terminal glycine residue with ATP, thereafter linking this residue to the side chain of the catalytic cysteine, yielding a nedd8-uba3 thioester and free AMP. E1 finally transfers nedd8 to the catalytic cysteine of ube2m. The covalent attachment of nedd8 to target proteins is known as 'neddylation' and the process is involved in the regulation of cell growth, viability and development. The protein is NEDD8-activating enzyme E1 regulatory subunit (nae1) of Danio rerio (Zebrafish).